Reading from the N-terminus, the 157-residue chain is ATP synthase subunit b (157 aa).

The chain crosses the membrane as a helical span at residues methionine 1–isoleucine 21.

Belongs to the ATPase B chain family. F-type ATPases have 2 components, F(1) - the catalytic core - and F(0) - the membrane proton channel. F(1) has five subunits: alpha(3), beta(3), gamma(1), delta(1), epsilon(1). F(0) has three main subunits: a(1), b(2) and c(10-14). The alpha and beta chains form an alternating ring which encloses part of the gamma chain. F(1) is attached to F(0) by a central stalk formed by the gamma and epsilon chains, while a peripheral stalk is formed by the delta and b chains.

The protein localises to the cell inner membrane. In terms of biological role, f(1)F(0) ATP synthase produces ATP from ADP in the presence of a proton or sodium gradient. F-type ATPases consist of two structural domains, F(1) containing the extramembraneous catalytic core and F(0) containing the membrane proton channel, linked together by a central stalk and a peripheral stalk. During catalysis, ATP synthesis in the catalytic domain of F(1) is coupled via a rotary mechanism of the central stalk subunits to proton translocation. Its function is as follows. Component of the F(0) channel, it forms part of the peripheral stalk, linking F(1) to F(0). The protein is ATP synthase subunit b of Rickettsia bellii (strain RML369-C).